The primary structure comprises 1058 residues: DNA primase (1058 aa).

Residues 988-1028 (CLRFKHGRASRATARTFVALSVGANNRLCVSLCQQCFAAKC) form a CHC2-type zinc finger.

Belongs to the herpesviridae DNA primase family. In terms of assembly, associates with the helicase and the primase-associated factor to form the helicase-primase factor.

It is found in the host nucleus. Essential component of the helicase/primase complex. Unwinds the DNA at the replication forks and generates single-stranded DNA for both leading and lagging strand synthesis. The primase initiates primer synthesis and thereby produces large amount of short RNA primers on the lagging strand that the polymerase elongates using dNTPs. The chain is DNA primase from Homo sapiens (Human).